The primary structure comprises 237 residues: MNQHQLHQQLQQQLLQQQQQQLQYQQQQHNMQQQQQLLQQQQLKMNIQQQQQQQQQQQQQQQQQQQQQQQQQQLQQQQSPKKTIIQKYNEDLDDMVIKTYTTRLVLTWIYNNPTPPILSPLPKLKVIPNSSSSKQFSNKTLHTSTHTFQDIESYVKEVFDLWDTVLSFFYSQHIKRSKAYYQNVKQSPQNVESDHTVKLTLKSILIGSIYYSDIFFRKSSVLKPKSNFTILDIVISR.

This is an uncharacterized protein from Dictyostelium discoideum (Social amoeba).